The sequence spans 187 residues: Inosine triphosphate pyrophosphatase (187 aa).

11-16 (TSNKNK) contributes to the ITP binding site. Mg(2+) is bound at residue Glu-39. ITP is bound by residues Lys-51, 67–68 (DT), Lys-84, 143–146 (FGWD), Lys-164, and 169–170 (HR).

It belongs to the HAM1 NTPase family. In terms of assembly, homodimer. The cofactor is Mg(2+). Mn(2+) is required as a cofactor.

It is found in the cytoplasm. The protein localises to the nucleus. It catalyses the reaction ITP + H2O = IMP + diphosphate + H(+). The enzyme catalyses dITP + H2O = dIMP + diphosphate + H(+). The catalysed reaction is XTP + H2O = XMP + diphosphate + H(+). Functionally, pyrophosphatase that hydrolyzes non-canonical purine nucleotides such as inosine triphosphate (ITP), deoxyinosine triphosphate (dITP) or xanthosine 5'-triphosphate (XTP) to their respective monophosphate derivatives. The enzyme does not distinguish between the deoxy- and ribose forms. Probably excludes non-canonical purines from RNA and DNA precursor pools, thus preventing their incorporation into RNA and DNA and avoiding chromosomal lesions. The polypeptide is Inosine triphosphate pyrophosphatase (Aspergillus fumigatus (strain ATCC MYA-4609 / CBS 101355 / FGSC A1100 / Af293) (Neosartorya fumigata)).